The primary structure comprises 282 residues: D-alanine aminotransferase (282 aa).

Tyr-32 is a substrate binding site. Arg-51 contacts pyridoxal 5'-phosphate. Substrate contacts are provided by Arg-99 and His-101. The active-site Proton acceptor is the Lys-146. Lys-146 is subject to N6-(pyridoxal phosphate)lysine. Glu-178 is a binding site for pyridoxal 5'-phosphate.

Belongs to the class-IV pyridoxal-phosphate-dependent aminotransferase family. As to quaternary structure, homodimer. Pyridoxal 5'-phosphate is required as a cofactor.

It carries out the reaction D-alanine + 2-oxoglutarate = D-glutamate + pyruvate. In terms of biological role, acts on the D-isomers of alanine, leucine, aspartate, glutamate, aminobutyrate, norvaline and asparagine. The enzyme transfers an amino group from a substrate D-amino acid to the pyridoxal phosphate cofactor to form pyridoxamine and an alpha-keto acid in the first half-reaction. The second half-reaction is the reverse of the first, transferring the amino group from the pyridoxamine to a second alpha-keto acid to form the product D-amino acid via a ping-pong mechanism. This is an important process in the formation of D-alanine and D-glutamate, which are essential bacterial cell wall components. This is D-alanine aminotransferase (dat) from Staphylococcus aureus (strain COL).